An 803-amino-acid chain; its full sequence is Dynein axonemal intermediate chain 4 (803 aa).

A compositionally biased stretch (polar residues) spans 1–33; the sequence is MPSSPTSTRKQTNFTASVSAQSRKSISFGNPKS. Disordered regions lie at residues 1 to 41, 88 to 109, and 143 to 163; these read MPSS…GYAG, LYHPDPHAMPTKPSKLLTSQEG, and STVSKSSISTTESMTEDLEDP. A compositionally biased stretch (low complexity) spans 143 to 155; sequence STVSKSSISTTES. WD repeat units follow at residues 492–532, 541–589, 616–656, 660–700, 703–742, and 748–787; these read QSPY…NTPV, KHLG…DCHD, SRQA…QYLE, GHKG…PFFT, PTTYVVYDVAWSPKSAYIFAAANENRVEIWDLQISTLDPL, and NPGIKFTTVLFAKQTDCLLVGDSDGQVAVYELRNMPTPTE.

Part of the multisubunit axonemal dynein complex formed at least of two heavy chains and a number of intermediate and light chains. Associated with axonemal dynein subunits such as, DNAH2, DNAI3, and DYNLT1. Interacts with DYNLT1.

The protein localises to the cytoplasm. It localises to the cytoskeleton. The protein resides in the flagellum axoneme. Its subcellular location is the cilium axoneme. It is found in the dynein axonemal particle. In terms of biological role, plays a critical role in the assembly of axonemal dynein complex, thereby playing a role in ciliary motility. The sequence is that of Dynein axonemal intermediate chain 4 from Rattus norvegicus (Rat).